The chain runs to 190 residues: Jupiter microtubule associated homolog 2 (190 aa).

Residue M1 is modified to N-acetylmethionine. Residues 1–190 (MFQVPDSEGG…PGGKSSISFY (190 aa)) are disordered. S30 bears the Phosphoserine mark. T35 carries the phosphothreonine modification. The span at 35–44 (TPSSRPNRMA) shows a compositional bias: polar residues. Phosphoserine occurs at positions 45, 69, and 97. Basic and acidic residues predominate over residues 110-129 (KPKDHVFLCEGEEPKSDLKA). Phosphoserine is present on residues S132 and S144. A compositionally biased stretch (basic and acidic residues) spans 139–167 (PGEKGSARKAGPAKEQEPMPTVDSHEPRL).

It belongs to the JUPITER family. Monomer. Dimer. Interacts with TPCN1. In terms of tissue distribution, expressed in liver, kidney, prostate, testis and uterus.

The protein resides in the cytoplasm. Its subcellular location is the nucleus. Functionally, nicotinic acid adenine dinucleotide phosphate (NAADP) binding protein required for NAADP-evoked intracellular calcium release. Confers NAADP-sensitivity to the two pore channels (TPCs) complex. Enables NAADP to activate Ca(2+) release from the endoplasmic reticulum through ryanodine receptors. (Microbial infection) Involved in the endolysosomal trafficking of human coronavirus SARS-CoV-2. This chain is Jupiter microtubule associated homolog 2, found in Homo sapiens (Human).